Reading from the N-terminus, the 430-residue chain is Probable carboxypeptidase AFLA_037450 (430 aa).

Positions 1–16 (MKSIYSLVLCTALTAA) are cleaved as a signal peptide. N-linked (GlcNAc...) asparagine glycosylation is present at Asn84. Asp156 contributes to the Zn(2+) binding site. Glu188 serves as the catalytic Proton acceptor. Glu189 contacts Zn(2+). The N-linked (GlcNAc...) asparagine glycan is linked to Asn285.

It belongs to the peptidase M20A family. Zn(2+) is required as a cofactor.

It localises to the secreted. The polypeptide is Probable carboxypeptidase AFLA_037450 (Aspergillus flavus (strain ATCC 200026 / FGSC A1120 / IAM 13836 / NRRL 3357 / JCM 12722 / SRRC 167)).